Reading from the N-terminus, the 138-residue chain is Large ribosomal subunit protein uL16 (138 aa).

The span at 1–13 (MLQPARRKYRKEQ) shows a compositional bias: basic residues. The interval 1 to 20 (MLQPARRKYRKEQKGRNTGV) is disordered.

This sequence belongs to the universal ribosomal protein uL16 family. Part of the 50S ribosomal subunit.

Binds 23S rRNA and is also seen to make contacts with the A and possibly P site tRNAs. In Verminephrobacter eiseniae (strain EF01-2), this protein is Large ribosomal subunit protein uL16.